Here is an 859-residue protein sequence, read N- to C-terminus: Homeobox-leucine zipper protein HOX32 (859 aa).

A disordered region spans residues 7–31 (AAVHGVGRQDRSSPGGGGAPQVDTG). The segment at residues 29–92 (DTGKYVRYTP…NRRCREKQRK (64 aa)) is a DNA-binding region (homeobox). Positions 100-129 (VNRKLTAMNKLLMEENDRLQKQVSRLVYEN) form a coiled coil. Residues 146–164 (TSCESVVTSGQHHQQQNPA) show a composition bias toward polar residues. A disordered region spans residues 146-172 (TSCESVVTSGQHHQQQNPAATRPQRDA). The region spanning 171–393 (DANNPAGLLA…LRHIRQIAHE (223 aa)) is the START domain.

The protein belongs to the HD-ZIP homeobox family. Class III subfamily. Expressed in seedlings, roots, stems, leaf sheaths and blades and panicles.

It is found in the nucleus. Functionally, probable transcription factor. This Oryza sativa subsp. japonica (Rice) protein is Homeobox-leucine zipper protein HOX32 (HOX32).